A 508-amino-acid polypeptide reads, in one-letter code: NAD(P)H-quinone oxidoreductase subunit 2 B, chloroplastic (508 aa).

Transmembrane regions (helical) follow at residues 24–44 (LLLF…GLIL), 59–79 (WLYF…LFRW), 99–119 (IFQF…VEYI), 124–144 (MAIT…MFLC), 149–169 (FITI…LSGY), 184–204 (LLMG…LYGL), 227–247 (PGIS…LSPA), 295–315 (WHLL…LIAI), 323–343 (MLAY…IVGD), 354–374 (YMLF…LFGL), 395–415 (ALSL…AGFF), 418–438 (LYLF…IGLL), and 482–502 (MIVC…IIAI).

This sequence belongs to the complex I subunit 2 family. As to quaternary structure, NDH is composed of at least 16 different subunits, 5 of which are encoded in the nucleus.

It is found in the plastid. The protein localises to the chloroplast thylakoid membrane. It catalyses the reaction a plastoquinone + NADH + (n+1) H(+)(in) = a plastoquinol + NAD(+) + n H(+)(out). The catalysed reaction is a plastoquinone + NADPH + (n+1) H(+)(in) = a plastoquinol + NADP(+) + n H(+)(out). Its function is as follows. NDH shuttles electrons from NAD(P)H:plastoquinone, via FMN and iron-sulfur (Fe-S) centers, to quinones in the photosynthetic chain and possibly in a chloroplast respiratory chain. The immediate electron acceptor for the enzyme in this species is believed to be plastoquinone. Couples the redox reaction to proton translocation, and thus conserves the redox energy in a proton gradient. This Ipomoea purpurea (Common morning glory) protein is NAD(P)H-quinone oxidoreductase subunit 2 B, chloroplastic.